A 374-amino-acid polypeptide reads, in one-letter code: MSTEKINLLDFDRKGMRELFAQELGEKAFRADQVMKWIYHFGVDDFDNMTNINKQLREKLKQKCEIVAPVVSEAQHSSDGTIKWAMRVGDQDVETVYIPEEDRATLCVSSQVGCALECKFCSTAQQGFNRNLKVSEIIGQVWRAAREVGLEKETGRRPITNVVMMGMGEPLLNMKNLIPALEIMLDDLGFGLSKRRVTVSTSGVVSGLDQMTGKIDVALAISLHAPNDKLRSEIMPINDRWDIQDFLASVRRYIASSNANRGKVTVEYVLLDHVNDGTEHAHELAQLMKDTPCKINLIPFNPYPGSPYKKPSNSRIDRFQKTLMQYEHTVTIRKTRGDDIDAACGQLVGDVIDRTKRTAMLKAAKGETIEVKAL.

Catalysis depends on Glu94, which acts as the Proton acceptor. A Radical SAM core domain is found at 100–339 (EEDRATLCVS…VTIRKTRGDD (240 aa)). Cys107 and Cys344 are joined by a disulfide. 3 residues coordinate [4Fe-4S] cluster: Cys114, Cys118, and Cys121. S-adenosyl-L-methionine-binding positions include 168 to 169 (GE), Ser200, 222 to 224 (SLH), and Asn301. Cys344 acts as the S-methylcysteine intermediate in catalysis.

Belongs to the radical SAM superfamily. RlmN family. It depends on [4Fe-4S] cluster as a cofactor.

It is found in the cytoplasm. The enzyme catalyses adenosine(2503) in 23S rRNA + 2 reduced [2Fe-2S]-[ferredoxin] + 2 S-adenosyl-L-methionine = 2-methyladenosine(2503) in 23S rRNA + 5'-deoxyadenosine + L-methionine + 2 oxidized [2Fe-2S]-[ferredoxin] + S-adenosyl-L-homocysteine. It carries out the reaction adenosine(37) in tRNA + 2 reduced [2Fe-2S]-[ferredoxin] + 2 S-adenosyl-L-methionine = 2-methyladenosine(37) in tRNA + 5'-deoxyadenosine + L-methionine + 2 oxidized [2Fe-2S]-[ferredoxin] + S-adenosyl-L-homocysteine. Its function is as follows. Specifically methylates position 2 of adenine 2503 in 23S rRNA and position 2 of adenine 37 in tRNAs. m2A2503 modification seems to play a crucial role in the proofreading step occurring at the peptidyl transferase center and thus would serve to optimize ribosomal fidelity. The sequence is that of Dual-specificity RNA methyltransferase RlmN from Vibrio vulnificus (strain CMCP6).